The primary structure comprises 423 residues: Protein FAM43A (423 aa).

A compositionally biased stretch (acidic residues) spans 263 to 283; that stretch reads EQELQEEEEEEQPEGCPEEEE. 3 disordered regions span residues 263-298, 321-344, and 382-423; these read EQELQEEEEEEQPEGCPEEEENRAAEGDPAEEEAEA, RGEALGGGGGSLGPGAGPPPLLLG, and LSGD…PHSG. Positions 323-335 are enriched in gly residues; it reads EALGGGGGSLGPG. The segment covering 383-393 has biased composition (low complexity); the sequence is SGDSTGSESSI. Residues 401 to 411 show a composition bias toward polar residues; the sequence is TSATAGDSSRQ.

This sequence belongs to the FAM43 family.

The sequence is that of Protein FAM43A (FAM43A) from Homo sapiens (Human).